A 215-amino-acid polypeptide reads, in one-letter code: Calcium-binding protein 7 (215 aa).

The Cytoplasmic segment spans residues 1–188 (MPFHPVTAAL…QIRQTCVRKS (188 aa)). EF-hand domains lie at 33-68 (DELE…LGYM) and 69-104 (PNEV…KLST). Residues aspartate 46, aspartate 48, asparagine 50, glutamate 57, aspartate 82, aspartate 84, aspartate 86, glutamine 88, and glutamate 93 each contribute to the Ca(2+) site. Residues 189–209 (LICAFAIAFIISVMLIAANQV) form a helical; Anchor for type IV membrane protein membrane-spanning segment. The Extracellular segment spans residues 210–215 (LRSGMK).

As to quaternary structure, interacts with PI4KB. This binding competes with FREQ/NCS1 binding in a calcium-dependent manner.

The protein resides in the golgi apparatus. It localises to the trans-Golgi network membrane. Its subcellular location is the cytoplasm. The protein localises to the perinuclear region. It is found in the cell membrane. Functionally, negatively regulates Golgi-to-plasma membrane trafficking by interacting with PI4KB and inhibiting its activity. This Homo sapiens (Human) protein is Calcium-binding protein 7 (CABP7).